Reading from the N-terminus, the 203-residue chain is Guanylate kinase (203 aa).

In terms of domain architecture, Guanylate kinase-like spans 3–181; that stretch reads GTLYVVSAPS…TLADLQAIFT (179 aa). ATP is bound at residue 10–17; sequence APSGAGKT.

It belongs to the guanylate kinase family.

The protein resides in the cytoplasm. The catalysed reaction is GMP + ATP = GDP + ADP. In terms of biological role, essential for recycling GMP and indirectly, cGMP. This chain is Guanylate kinase, found in Alkalilimnicola ehrlichii (strain ATCC BAA-1101 / DSM 17681 / MLHE-1).